A 549-amino-acid chain; its full sequence is Beta-mannosyltransferase 3 (549 aa).

Over 1–37 the chain is Cytoplasmic; sequence MFESDLSFYSALLILCCPISIVFFKKFPIKGYTGANK. A helical transmembrane segment spans residues 38–58; the sequence is VSLFLQCLIAILNLNILYSFI. Residues 59–549 lie on the Extracellular side of the membrane; sequence NSLTITLGHD…DTMGWDKLSR (491 aa).

This sequence belongs to the BMT family.

Its subcellular location is the membrane. Its function is as follows. Beta-mannosyltransferase involved in cell wall biosynthesis. Required for addition of the second beta-mannose residue to acid-stable fraction of cell wall phosphopeptidomannan, and in elongation of beta-mannose chains on the phosphopeptidomannan acid-labile fraction. The chain is Beta-mannosyltransferase 3 (BMT3) from Candida albicans (strain SC5314 / ATCC MYA-2876) (Yeast).